A 117-amino-acid chain; its full sequence is uncharacterized protein (117 aa).

The stretch at 5–50 forms a coiled coil; it reads DKIHNTNEQITALEKKKYQIETTLLEKQRDLLKLETQQNKAKLELL.

This is an uncharacterized protein from Bacillus pumilus (Bacillus mesentericus).